The sequence spans 245 residues: Intron-associated endonuclease 1 (245 aa).

Residues 1–88 (MKSGIYQIKN…IKELNSKING (88 aa)) form the GIY-YIG domain.

The protein to endonucleases of group I introns of fungi and phage. Mg(2+) is required as a cofactor.

This endonuclease is specific to the thymidylate synthase (td) gene splice junction and is involved in intron homing. In Enterobacteria phage T4 (Bacteriophage T4), this protein is Intron-associated endonuclease 1 (ITEVIR).